A 270-amino-acid polypeptide reads, in one-letter code: Calpain small subunit 1 (270 aa).

N-acetylmethionine is present on M1. At S6 the chain carries Phosphoserine. One can recognise an EF-hand 1; atypical domain in the interval 98–132 (EEERQFRKLFVQLAGDDMEVSATELMNILNKVVTR). Residues A111, D114, E116, E121, D139, D154, D156, T158, K160, and E165 each coordinate Ca(2+). EF-hand domains are found at residues 141–174 (FGID…NNIK), 171–206 (NNIK…AGFH), 207–235 (LNQH…ISCL), and 236–270 (VRLD…TMYS). N6-acetyllysine is present on K181. Residues D184, D186, S188, T190, E195, and D227 each contribute to the Ca(2+) site.

As to quaternary structure, homodimer or heterodimer of a large (catalytic) and a small (regulatory) subunit. In presence of calcium, the heterodimer dissociates.

The protein resides in the cytoplasm. The protein localises to the cell membrane. In terms of biological role, regulatory subunit of the calcium-regulated non-lysosomal thiol-protease which catalyzes limited proteolysis of substrates involved in cytoskeletal remodeling and signal transduction. Essential for embryonic development. The protein is Calpain small subunit 1 (Capns1) of Rattus norvegicus (Rat).